A 219-amino-acid chain; its full sequence is Putative zinc metalloprotease YwhC (219 aa).

A helical transmembrane segment spans residues 4 to 24 (FLYYPLSLMPYLVITLIVSFT). Residue histidine 26 participates in Zn(2+) binding. Glutamate 27 is a catalytic residue. Histidine 30 provides a ligand contact to Zn(2+). 4 helical membrane-spanning segments follow: residues 52-72 (PIKH…FGWA), 94-114 (IAGP…LVLM), 132-152 (FFSI…LPLP), and 180-200 (FIVF…WPML).

Belongs to the peptidase M50B family. Requires Zn(2+) as cofactor.

The protein localises to the cell membrane. This Bacillus subtilis (strain 168) protein is Putative zinc metalloprotease YwhC (ywhC).